Here is a 995-residue protein sequence, read N- to C-terminus: Putative pentatricopeptide repeat-containing protein At5g09950 (995 aa).

PPR repeat units follow at residues 35 to 65, 66 to 100, 101 to 137, 138 to 169, 170 to 204, 205 to 241, 242 to 276, 278 to 303, 307 to 342, 348 to 378, 379 to 413, 414 to 448, 449 to 483, 484 to 515, 516 to 550, 551 to 581, 583 to 617, 618 to 652, 653 to 683, 684 to 718, 720 to 750, and 756 to 786; these read DVYL…MPLR, NCVS…GIFS, NQYA…SYAV, DAVV…IEVK, NSVS…GSRP, TEYT…GLLT, DLFV…NAVT, NGLM…MNSM, SPES…VITT, MVGI…MTDK, DSVS…DILP, GSFT…GIDL, NVSV…DQVS, WNSI…GQKL, NRIT…NIAD, EATT…MAER, DNVT…GQRL, DSFM…CLES, DVVV…MPVR, NSYS…GQTP, DHVT…MSDS, and RIEH…MPMK. Residues 791–868 are type E motif; the sequence is IWRTVLGACC…EAGYSWVTMK (78 aa). The tract at residues 869 to 899 is type E(+) motif; the sequence is DGVHMFVAGDKSHPDADVIYKKLKELNRKMR. The tract at residues 900–995 is type DYW motif; the sequence is DAGYVPQTGF…DGACSCSDFW (96 aa).

It belongs to the PPR family. PCMP-H subfamily.

The sequence is that of Putative pentatricopeptide repeat-containing protein At5g09950 (PCMP-H35) from Arabidopsis thaliana (Mouse-ear cress).